A 329-amino-acid chain; its full sequence is DNA-directed RNA polymerase subunit alpha (329 aa).

Residues 1–235 (MQGSVTEFLK…EQLDAFVDLR (235 aa)) form an alpha N-terminal domain (alpha-NTD) region. The segment at 249–329 (FDPILLRPVD…NWPPASIAED (81 aa)) is alpha C-terminal domain (alpha-CTD).

This sequence belongs to the RNA polymerase alpha chain family. As to quaternary structure, homodimer. The RNAP catalytic core consists of 2 alpha, 1 beta, 1 beta' and 1 omega subunit. When a sigma factor is associated with the core the holoenzyme is formed, which can initiate transcription.

It catalyses the reaction RNA(n) + a ribonucleoside 5'-triphosphate = RNA(n+1) + diphosphate. Functionally, DNA-dependent RNA polymerase catalyzes the transcription of DNA into RNA using the four ribonucleoside triphosphates as substrates. The sequence is that of DNA-directed RNA polymerase subunit alpha from Aliivibrio salmonicida (strain LFI1238) (Vibrio salmonicida (strain LFI1238)).